Consider the following 276-residue polypeptide: Type 2 phosphatidylinositol 4,5-bisphosphate 4-phosphatase (276 aa).

The segment covering 1 to 10 (MAADGIDERS) has biased composition (basic and acidic residues). The interval 1 to 27 (MAADGIDERSPLISPSSGNVTPTAPPY) is disordered. Residues 13 to 27 (ISPSSGNVTPTAPPY) are compositionally biased toward polar residues. Cys-106 is an active-site residue. Positions 106 to 112 (CKDISRR) match the CX5R motif motif. 2 helical membrane-spanning segments follow: residues 211-231 (CCTY…LTVG) and 246-266 (WAVA…WGAI).

Its subcellular location is the late endosome membrane. It is found in the lysosome membrane. It catalyses the reaction a 1,2-diacyl-sn-glycero-3-phospho-(1D-myo-inositol-4,5-bisphosphate) + H2O = a 1,2-diacyl-sn-glycero-3-phospho-(1D-myo-inositol-5-phosphate) + phosphate. Functionally, catalyzes the hydrolysis of phosphatidylinositol-4,5-bisphosphate (PtdIns-4,5-P2) to phosphatidylinositol-4-phosphate (PtdIns-4-P). This Xenopus tropicalis (Western clawed frog) protein is Type 2 phosphatidylinositol 4,5-bisphosphate 4-phosphatase (pip4p2).